Consider the following 202-residue polypeptide: Heat shock 22 kDa protein, mitochondrial (202 aa).

The transit peptide at 1-31 directs the protein to the mitochondrion; the sequence is MASSLALKRFLSSGLLSSSFLRPVASSASRS. Residues 94-202 form the sHSP domain; it reads VLSAASRRGW…RNNVINVKVD (109 aa).

Belongs to the small heat shock protein (HSP20) family.

The protein resides in the mitochondrion. The polypeptide is Heat shock 22 kDa protein, mitochondrial (HSP22) (Pisum sativum (Garden pea)).